The chain runs to 174 residues: Ribosome maturation factor RimP (174 aa).

Belongs to the RimP family.

Its subcellular location is the cytoplasm. Functionally, required for maturation of 30S ribosomal subunits. The chain is Ribosome maturation factor RimP from Acinetobacter baumannii (strain AB307-0294).